A 427-amino-acid polypeptide reads, in one-letter code: CCA-adding enzyme (427 aa).

ATP-binding residues include serine 50 and lysine 53. CTP contacts are provided by serine 50 and lysine 53. Residues aspartate 61, aspartate 63, and aspartate 112 each contribute to the Mg(2+) site. Positions 135, 155, and 164 each coordinate ATP. Residues histidine 135, lysine 155, and tyrosine 164 each contribute to the CTP site.

Belongs to the tRNA nucleotidyltransferase/poly(A) polymerase family. Archaeal CCA-adding enzyme subfamily. Homodimer. Requires Mg(2+) as cofactor.

The catalysed reaction is a tRNA precursor + 2 CTP + ATP = a tRNA with a 3' CCA end + 3 diphosphate. It catalyses the reaction a tRNA with a 3' CCA end + 2 CTP + ATP = a tRNA with a 3' CCACCA end + 3 diphosphate. Functionally, catalyzes the addition and repair of the essential 3'-terminal CCA sequence in tRNAs without using a nucleic acid template. Adds these three nucleotides in the order of C, C, and A to the tRNA nucleotide-73, using CTP and ATP as substrates and producing inorganic pyrophosphate. tRNA 3'-terminal CCA addition is required both for tRNA processing and repair. Also involved in tRNA surveillance by mediating tandem CCA addition to generate a CCACCA at the 3' terminus of unstable tRNAs. While stable tRNAs receive only 3'-terminal CCA, unstable tRNAs are marked with CCACCA and rapidly degraded. The chain is CCA-adding enzyme from Picrophilus torridus (strain ATCC 700027 / DSM 9790 / JCM 10055 / NBRC 100828 / KAW 2/3).